A 578-amino-acid polypeptide reads, in one-letter code: Arginine--tRNA ligase (578 aa).

A 'HIGH' region motif is present at residues 127-137; sequence PNLAKEMHVGH.

This sequence belongs to the class-I aminoacyl-tRNA synthetase family. As to quaternary structure, monomer.

The protein resides in the cytoplasm. It catalyses the reaction tRNA(Arg) + L-arginine + ATP = L-arginyl-tRNA(Arg) + AMP + diphosphate. This is Arginine--tRNA ligase from Pseudomonas entomophila (strain L48).